We begin with the raw amino-acid sequence, 257 residues long: Snake venom serine protease CL5 (257 aa).

The first 18 residues, M1–A18, serve as a signal peptide directing secretion. A propeptide spanning residues Q19–L24 is cleaved from the precursor. One can recognise a Peptidase S1 domain in the interval V25–A248. 5 disulfides stabilise this stretch: C31–C162, C49–C65, C141–C209, C173–C188, and C199–C224. Residue H64 is the Charge relay system of the active site. Residues N78 and N102 are each glycosylated (N-linked (GlcNAc...) asparagine). D109 (charge relay system) is an active-site residue. N-linked (GlcNAc...) asparagine glycosylation is found at N153 and N169. Catalysis depends on S203, which acts as the Charge relay system. Residue N250 is glycosylated (N-linked (GlcNAc...) asparagine).

This sequence belongs to the peptidase S1 family. Snake venom subfamily. Monomer. Expressed by the venom gland.

It is found in the secreted. Its function is as follows. Snake venom serine protease that may act in the hemostasis system of the prey. This is Snake venom serine protease CL5 from Trimeresurus stejnegeri (Chinese green tree viper).